The primary structure comprises 347 residues: Phosphoribosylformylglycinamidine cyclo-ligase (347 aa).

Belongs to the AIR synthase family.

Its subcellular location is the cytoplasm. It catalyses the reaction 2-formamido-N(1)-(5-O-phospho-beta-D-ribosyl)acetamidine + ATP = 5-amino-1-(5-phospho-beta-D-ribosyl)imidazole + ADP + phosphate + H(+). It participates in purine metabolism; IMP biosynthesis via de novo pathway; 5-amino-1-(5-phospho-D-ribosyl)imidazole from N(2)-formyl-N(1)-(5-phospho-D-ribosyl)glycinamide: step 2/2. In Yersinia pestis, this protein is Phosphoribosylformylglycinamidine cyclo-ligase.